Here is a 138-residue protein sequence, read N- to C-terminus: Vesicle transport protein GOT1B (138 aa).

At Met-1 the chain carries N-acetylmethionine. Topologically, residues 1–9 are cytoplasmic; sequence MISLTDTQK. Residues 10-30 traverse the membrane as a helical segment; sequence IGMGLTGFGVFFLFFGMILFF. Residues 31–32 lie on the Lumenal side of the membrane; sequence DK. The chain crosses the membrane as a helical span at residues 33–53; that stretch reads ALLAIGNVLFVAGLAFVIGLE. Topologically, residues 54 to 68 are cytoplasmic; sequence RTFRFFFQKHKMKAT. A helical membrane pass occupies residues 69 to 89; the sequence is GFFLGGVFVVLIGWPLIGMIF. A topological domain (lumenal) is located at residue Glu-90. Residues 91 to 109 traverse the membrane as a helical segment; sequence IYGFFLLFRGFFPVVVGFI. Topologically, residues 110-138 are cytoplasmic; the sequence is RRVPVLGSLLNLPGIRSFVDKVGESNNMV.

This sequence belongs to the GOT1 family.

The protein localises to the golgi apparatus membrane. Its function is as follows. May be involved in fusion of ER-derived transport vesicles with the Golgi complex. The protein is Vesicle transport protein GOT1B of Bos taurus (Bovine).